We begin with the raw amino-acid sequence, 441 residues long: Matrix extracellular phosphoglycoprotein (441 aa).

An N-terminal signal peptide occupies residues 1 to 24 (MTPEGLMKMQAVSVGLLLFSMTWA). Residue Asn82 is glycosylated (N-linked (GlcNAc...) asparagine). The tract at residues 137–441 (QSSPVKSKHT…SGSSSESHGD (305 aa)) is disordered. A compositionally biased stretch (basic residues) spans 142–156 (KSKHTKHTRQTRRST). The dentonin stretch occupies residues 178–200 (PDLLVRGDNDVPPFSGDGQHFMH). Residues 183–185 (RGD) carry the Cell attachment site motif. Ser192 is a glycosylation site (O-linked (Xyl...) (chondroitin sulfate) serine). Positions 211 to 223 (PESSTSRPLSGSS) are enriched in polar residues. Residues 313 to 325 (SREKVKGGVEHAG) are compositionally biased toward basic and acidic residues. Composition is skewed to polar residues over residues 349-358 (GNQLTLTASQ) and 391-405 (GQNNLTPNKGMSQRR). Residues 424 to 441 (RDSSESSSSGSSSESHGD) are ASARM motif; interaction with PHEX. Over residues 428–441 (ESSSSGSSSESHGD) the composition is skewed to low complexity.

This sequence belongs to the PF07175/osteoregulin family. Interacts (via ASARM motif) with PHEX; the interaction is zinc-dependent. Post-translationally, phosphorylated on serine residues in the ASARM motif; the phosphorylation is important for the inhibition of bone mineralization. In terms of processing, cleaved by CTSB/cathepsin B; the cleavage is blocked by metalloprotease PHEX. As to expression, expressed in osteocytes (at protein level). Expressed by chondrocytes, specifically in the hypertrophic zone of the bone growth plate (at protein level). Expressed in osteoblasts in bone (at protein level). Expressed by osteoblasts within the metaphysis (at protein level). Expressed at low levels in white fat, brown fat, testes, brain and aorta. Expressed in the craniofacial complex (at protein level). Expressed in odontoblasts, ameloblasts and in predentin during tooth development (at protein level). Expressed in the kidney (at protein level). Expressed in osteocytes in mandibular condylar cartilage and tibial cartilage (at protein level). Expressed in salivary glands.

It localises to the secreted. Its subcellular location is the extracellular space. The protein resides in the extracellular matrix. Functionally, regulates renal phosphate and uric acid excretion. Regulates bone mineralization by osteoblasts and cartilage mineralization by chondrocytes. Regulates the mineralization of the extracellular matrix of the craniofacial complex, such as teeth, bone and cartilage. Increases dental pulp stem cell proliferation. This Mus musculus (Mouse) protein is Matrix extracellular phosphoglycoprotein.